Here is a 186-residue protein sequence, read N- to C-terminus: Peptidyl-tRNA hydrolase (186 aa).

Y14 serves as a coordination point for tRNA. The active-site Proton acceptor is the H19. The tRNA site is built by Y64, N66, and N112.

It belongs to the PTH family. In terms of assembly, monomer.

It is found in the cytoplasm. The enzyme catalyses an N-acyl-L-alpha-aminoacyl-tRNA + H2O = an N-acyl-L-amino acid + a tRNA + H(+). Its function is as follows. Hydrolyzes ribosome-free peptidyl-tRNAs (with 1 or more amino acids incorporated), which drop off the ribosome during protein synthesis, or as a result of ribosome stalling. In terms of biological role, catalyzes the release of premature peptidyl moieties from peptidyl-tRNA molecules trapped in stalled 50S ribosomal subunits, and thus maintains levels of free tRNAs and 50S ribosomes. The polypeptide is Peptidyl-tRNA hydrolase (Geobacillus thermodenitrificans (strain NG80-2)).